A 311-amino-acid chain; its full sequence is Urease accessory protein UreD (311 aa).

It belongs to the UreD family. UreD, UreF and UreG form a complex that acts as a GTP-hydrolysis-dependent molecular chaperone, activating the urease apoprotein by helping to assemble the nickel containing metallocenter of UreC. The UreE protein probably delivers the nickel.

The protein localises to the cytoplasm. Required for maturation of urease via the functional incorporation of the urease nickel metallocenter. In Parasynechococcus marenigrum (strain WH8102), this protein is Urease accessory protein UreD.